The primary structure comprises 282 residues: 4-diphosphocytidyl-2-C-methyl-D-erythritol kinase (282 aa).

The active site involves K9. 98-108 lines the ATP pocket; that stretch reads PMGGGLGGGSS. D140 is a catalytic residue.

It belongs to the GHMP kinase family. IspE subfamily. As to quaternary structure, homodimer.

The catalysed reaction is 4-CDP-2-C-methyl-D-erythritol + ATP = 4-CDP-2-C-methyl-D-erythritol 2-phosphate + ADP + H(+). Its pathway is isoprenoid biosynthesis; isopentenyl diphosphate biosynthesis via DXP pathway; isopentenyl diphosphate from 1-deoxy-D-xylulose 5-phosphate: step 3/6. In terms of biological role, catalyzes the phosphorylation of the position 2 hydroxy group of 4-diphosphocytidyl-2C-methyl-D-erythritol. This is 4-diphosphocytidyl-2-C-methyl-D-erythritol kinase from Salmonella schwarzengrund (strain CVM19633).